A 488-amino-acid chain; its full sequence is Endoglucanase A (488 aa).

Substrate contacts are provided by residues histidine 59, 63–64 (WY), tyrosine 90, and histidine 125. Glutamate 163 serves as the catalytic Proton donor. Tyrosine 226 is a binding site for substrate. Glutamate 252 functions as the Nucleophile in the catalytic mechanism. Substrate-binding positions include 258-259 (AT), tryptophan 286, and 291-293 (KDE). Disordered stretches follow at residues 326 to 362 (ESASIPPSDPTPPSDPDPGEPDPTPPSDPGEYPAWDP) and 388 to 451 (EPGA…WDPT). Composition is skewed to pro residues over residues 332 to 353 (PSDPTPPSDPDPGEPDPTPPSD) and 405 to 416 (PSEPSDPPPPSE). Residues 417-433 (PEPDPGEPDPGEPDPGE) show a composition bias toward acidic residues.

It belongs to the glycosyl hydrolase 5 (cellulase A) family.

It catalyses the reaction Endohydrolysis of (1-&gt;4)-beta-D-glucosidic linkages in cellulose, lichenin and cereal beta-D-glucans.. This is Endoglucanase A (celA) from Evansella cellulosilytica (strain ATCC 21833 / DSM 2522 / FERM P-1141 / JCM 9156 / N-4) (Bacillus cellulosilyticus).